The following is a 637-amino-acid chain: DNA mismatch repair protein MutL (637 aa).

Positions 353 to 371 (GQGQRPVSSASMPSASRQA) are enriched in polar residues. Residues 353 to 444 (GQGQRPVSSA…SEAASETPHD (92 aa)) form a disordered region. Residues 378-389 (DWIKEGVQDWDW) are compositionally biased toward basic and acidic residues. Residues 396–406 (PQNPPQNPPPG) are compositionally biased toward pro residues. Basic and acidic residues predominate over residues 430 to 444 (SGKELSEAASETPHD).

The protein belongs to the DNA mismatch repair MutL/HexB family.

In terms of biological role, this protein is involved in the repair of mismatches in DNA. It is required for dam-dependent methyl-directed DNA mismatch repair. May act as a 'molecular matchmaker', a protein that promotes the formation of a stable complex between two or more DNA-binding proteins in an ATP-dependent manner without itself being part of a final effector complex. This chain is DNA mismatch repair protein MutL, found in Beijerinckia indica subsp. indica (strain ATCC 9039 / DSM 1715 / NCIMB 8712).